The chain runs to 441 residues: MTEHRVTVIGAGLAGSEAAWQLARRGIHVDLYEMRPQKYPPAHHTAYFSELVCSNSLRAAAIENAVGLLKEEMRQLDSLIISAADNHKVPAGGALAVDREGFSRYITETLEDHPLIDIHREEVTKIPEKGIVIVASGPLTSESLSHEIAKVTGEQYLYFYDAAAPIVTLESLDMTKVFRASRYGKGEEAYLNCPMDQDEYEKFYDALIHAERAPIKEFEKQVHFEGCMPVEVLASRGKDTLLYGPLKPVGLTDPRTGKRPHGVVQLRQDNAEGTLFNLVGFQTNLKWGEQKRVFSFIPGLEDAEFVRYGVMHRNTYITSPVLLQPTLQMKEHPRIFFAGQITGVEGYVESAAAGLIAGINAAALAKQKDLLIFPKETAHGALMHYITTASTKNFQPMNVTFGLFPELTVRLKGKRERGRAQAERALEILKEWIEKEKICDI.

10-15 (GAGLAG) contacts FAD.

It belongs to the MnmG family. TrmFO subfamily. It depends on FAD as a cofactor.

The protein resides in the cytoplasm. It carries out the reaction uridine(54) in tRNA + (6R)-5,10-methylene-5,6,7,8-tetrahydrofolate + NADH + H(+) = 5-methyluridine(54) in tRNA + (6S)-5,6,7,8-tetrahydrofolate + NAD(+). It catalyses the reaction uridine(54) in tRNA + (6R)-5,10-methylene-5,6,7,8-tetrahydrofolate + NADPH + H(+) = 5-methyluridine(54) in tRNA + (6S)-5,6,7,8-tetrahydrofolate + NADP(+). Functionally, catalyzes the folate-dependent formation of 5-methyl-uridine at position 54 (M-5-U54) in all tRNAs. The sequence is that of Methylenetetrahydrofolate--tRNA-(uracil-5-)-methyltransferase TrmFO from Desulforamulus reducens (strain ATCC BAA-1160 / DSM 100696 / MI-1) (Desulfotomaculum reducens).